We begin with the raw amino-acid sequence, 73 residues long: Protein SlyX homolog (73 aa).

Belongs to the SlyX family.

In Haemophilus influenzae (strain PittEE), this protein is Protein SlyX homolog.